Reading from the N-terminus, the 462-residue chain is uncharacterized protein (462 aa).

A TRAM domain is found at 12-70 (MLKKNDIIQVAISDLSHEGAGVAKHDGFVFFVDNALPEEVIDMRVLKVNKNSGFGKVEA). S-adenosyl-L-methionine contacts are provided by Q294, Y323, E344, and D392. C419 (nucleophile) is an active-site residue.

Belongs to the class I-like SAM-binding methyltransferase superfamily. RNA M5U methyltransferase family.

This is an uncharacterized protein from Streptococcus pyogenes serotype M1.